The sequence spans 450 residues: Na(+)/H(+) antiporter NhaA 1 (450 aa).

The next 11 helical transmembrane spans lie at 35–55, 79–99, 117–137, 143–163, 173–193, 198–218, 224–244, 320–340, 356–376, 392–412, and 423–443; these read SSLFLLFATIIALWWANSDYA, LKHIINDGLMVIFFFLLGLEI, LIICAMGGMVCPALIYSGFNW, IGWGIPMATDTAFALGVLTMV, AFIVGLAIVDDVGAILVIAIF, ISLMHLLSACALIGFLGVANY, PLFYFIIGVAAWWAMLKSGVH, LPVVLFILPLFALANAGVVIN, IISGLILGKLIGISGACWFAL, VIGASLIAGIGFTMSTFIATL, and VAKTSILLASVLTAILGLLYL.

Belongs to the NhaA Na(+)/H(+) (TC 2.A.33) antiporter family.

It is found in the cell inner membrane. The enzyme catalyses Na(+)(in) + 2 H(+)(out) = Na(+)(out) + 2 H(+)(in). Its function is as follows. Na(+)/H(+) antiporter that extrudes sodium in exchange for external protons. In Shewanella denitrificans (strain OS217 / ATCC BAA-1090 / DSM 15013), this protein is Na(+)/H(+) antiporter NhaA 1.